We begin with the raw amino-acid sequence, 168 residues long: MSGKAQIFKQTGVRWLWLALVVFLADIGIKFIVMENMGYGWANRIEVLPFFNLLYVHNYGAAFSFLSDQAGWQRWLFTGIAFVVTGLLTYWMSKLPAAEKWNNVAYAMIIGGAIGNVFDRMVHGFVVDYLDFYWGTYHWPAFNLADTAICLGAAMIILDGFRKKEEEK.

4 helical membrane passes run 15-35 (WLWL…IVME), 47-67 (VLPF…SFLS), 75-95 (WLFT…MSKL), and 107-127 (AMII…GFVV). Active-site residues include D128 and D146. The helical transmembrane segment at 141-161 (AFNLADTAICLGAAMIILDGF) threads the bilayer.

This sequence belongs to the peptidase A8 family.

It localises to the cell inner membrane. It catalyses the reaction Release of signal peptides from bacterial membrane prolipoproteins. Hydrolyzes -Xaa-Yaa-Zaa-|-(S,diacylglyceryl)Cys-, in which Xaa is hydrophobic (preferably Leu), and Yaa (Ala or Ser) and Zaa (Gly or Ala) have small, neutral side chains.. It participates in protein modification; lipoprotein biosynthesis (signal peptide cleavage). This protein specifically catalyzes the removal of signal peptides from prolipoproteins. The chain is Lipoprotein signal peptidase from Vibrio vulnificus (strain CMCP6).